A 37-amino-acid chain; its full sequence is Antifungal protein S (37 aa).

The protein belongs to the thaumatin family.

Has antifungal activity. Inhibits the growth of Trichoderma viridae and Candida albicans. The sequence is that of Antifungal protein S from Hordeum vulgare (Barley).